Consider the following 322-residue polypeptide: Tropinone reductase homolog At2g29260, chloroplastic (322 aa).

The transit peptide at 1–61 (MVLDMASHLY…YASQSSIAIT (61 aa)) directs the protein to the chloroplast. An NADP(+)-binding site is contributed by 74 to 98 (LVTGGTRGIGRAIVEELAGLGAEVH). A substrate-binding site is contributed by Ser207.

This sequence belongs to the short-chain dehydrogenases/reductases (SDR) family. SDR65C subfamily.

It localises to the plastid. Its subcellular location is the chloroplast. The protein is Tropinone reductase homolog At2g29260, chloroplastic of Arabidopsis thaliana (Mouse-ear cress).